The following is a 185-amino-acid chain: Peptidyl-tRNA hydrolase (185 aa).

Tyr14 is a tRNA binding site. His19 functions as the Proton acceptor in the catalytic mechanism. Tyr64, Asn66, and Asn112 together coordinate tRNA.

It belongs to the PTH family. In terms of assembly, monomer.

It is found in the cytoplasm. The catalysed reaction is an N-acyl-L-alpha-aminoacyl-tRNA + H2O = an N-acyl-L-amino acid + a tRNA + H(+). Functionally, hydrolyzes ribosome-free peptidyl-tRNAs (with 1 or more amino acids incorporated), which drop off the ribosome during protein synthesis, or as a result of ribosome stalling. Catalyzes the release of premature peptidyl moieties from peptidyl-tRNA molecules trapped in stalled 50S ribosomal subunits, and thus maintains levels of free tRNAs and 50S ribosomes. The polypeptide is Peptidyl-tRNA hydrolase (Lactobacillus acidophilus (strain ATCC 700396 / NCK56 / N2 / NCFM)).